The chain runs to 263 residues: Endonuclease 8 (263 aa).

Pro2 (schiff-base intermediate with DNA) is an active-site residue. Residue Glu3 is the Proton donor of the active site. The active-site Proton donor; for beta-elimination activity is the Lys53. Positions 70, 125, and 169 each coordinate DNA. The FPG-type zinc-finger motif lies at 229 to 263 (KVFHRDGERCERCGGIIEKTTLSSRPFYWCPGCQH). The Proton donor; for delta-elimination activity role is filled by Arg253.

This sequence belongs to the FPG family. Zn(2+) serves as cofactor.

The catalysed reaction is 2'-deoxyribonucleotide-(2'-deoxyribose 5'-phosphate)-2'-deoxyribonucleotide-DNA = a 3'-end 2'-deoxyribonucleotide-(2,3-dehydro-2,3-deoxyribose 5'-phosphate)-DNA + a 5'-end 5'-phospho-2'-deoxyribonucleoside-DNA + H(+). In terms of biological role, involved in base excision repair of DNA damaged by oxidation or by mutagenic agents. Acts as a DNA glycosylase that recognizes and removes damaged bases. Has a preference for oxidized pyrimidines, such as thymine glycol, 5,6-dihydrouracil and 5,6-dihydrothymine. Has AP (apurinic/apyrimidinic) lyase activity and introduces nicks in the DNA strand. Cleaves the DNA backbone by beta-delta elimination to generate a single-strand break at the site of the removed base with both 3'- and 5'-phosphates. The protein is Endonuclease 8 of Klebsiella pneumoniae subsp. pneumoniae (strain ATCC 700721 / MGH 78578).